The following is a 67-amino-acid chain: Large ribosomal subunit protein bL35 (67 aa).

Belongs to the bacterial ribosomal protein bL35 family.

This Rickettsia prowazekii (strain Madrid E) protein is Large ribosomal subunit protein bL35.